Here is an 878-residue protein sequence, read N- to C-terminus: Alanine--tRNA ligase (878 aa).

4 residues coordinate Zn(2+): histidine 571, histidine 575, cysteine 673, and histidine 677.

Belongs to the class-II aminoacyl-tRNA synthetase family. Zn(2+) is required as a cofactor.

It is found in the cytoplasm. It carries out the reaction tRNA(Ala) + L-alanine + ATP = L-alanyl-tRNA(Ala) + AMP + diphosphate. Catalyzes the attachment of alanine to tRNA(Ala) in a two-step reaction: alanine is first activated by ATP to form Ala-AMP and then transferred to the acceptor end of tRNA(Ala). Also edits incorrectly charged Ser-tRNA(Ala) and Gly-tRNA(Ala) via its editing domain. The chain is Alanine--tRNA ligase from Syntrophus aciditrophicus (strain SB).